The chain runs to 1038 residues: Probable ubiquitin conjugation factor E4 (1038 aa).

Disordered stretches follow at residues 430–459 (ANDA…ASGQ) and 1010–1038 (SHQS…MLID). The segment covering 446–459 (SKEATSSSSNASGQ) has biased composition (low complexity). A U-box domain is found at 940-1014 (EIPDEFLDPI…DEFVKSHQSK (75 aa)). Residues 1017-1028 (TSGEDSSNKERI) are compositionally biased toward basic and acidic residues. A compositionally biased stretch (polar residues) spans 1029 to 1038 (QTTNSDMLID).

This sequence belongs to the ubiquitin conjugation factor E4 family.

Its subcellular location is the cytoplasm. The protein resides in the nucleus. The catalysed reaction is S-ubiquitinyl-[E2 ubiquitin-conjugating enzyme]-L-cysteine + [acceptor protein]-L-lysine = [E2 ubiquitin-conjugating enzyme]-L-cysteine + N(6)-ubiquitinyl-[acceptor protein]-L-lysine.. Its pathway is protein modification; protein ubiquitination. Its function is as follows. Ubiquitin-protein ligase that may function as an E3 ligase in conjunction with specific E1 and E2 ligases. May also function as an E4 ligase mediating the assembly of polyubiquitin chain assembly on substrates monoubiquitinated by another E3 ubiquitin ligase. This is Probable ubiquitin conjugation factor E4 (PUB1) from Arabidopsis thaliana (Mouse-ear cress).